The primary structure comprises 128 residues: uncharacterized protein (128 aa).

As to expression, high expression in pituitary gland and weak in pancreas.

This is an uncharacterized protein from Homo sapiens (Human).